Consider the following 99-residue polypeptide: Leydig cell tumor 10 kDa protein homolog (99 aa).

The disordered stretch occupies residues 1–36; that stretch reads MAQGQRKFQAHKPAKSKTAAAASEKNRGPRKGGRVI.

Belongs to the UPF0390 family.

Functionally, may have a potential role in hypercalcemia of malignancy. This chain is Leydig cell tumor 10 kDa protein homolog (C19orf53), found in Homo sapiens (Human).